The following is a 550-amino-acid chain: Arginine--tRNA ligase (550 aa).

Residues 130–140 (ANPTGPIHIGG) carry the 'HIGH' region motif.

The protein belongs to the class-I aminoacyl-tRNA synthetase family. Monomer.

The protein localises to the cytoplasm. It carries out the reaction tRNA(Arg) + L-arginine + ATP = L-arginyl-tRNA(Arg) + AMP + diphosphate. This Mycobacterium sp. (strain KMS) protein is Arginine--tRNA ligase.